A 545-amino-acid chain; its full sequence is CTP synthase (545 aa).

An amidoligase domain region spans residues 1-266 (MKTNYIFVTG…DDYICKRFSL (266 aa)). Serine 14 serves as a coordination point for CTP. Residue serine 14 participates in UTP binding. Residues 15 to 20 (SLGKGI) and aspartate 72 each bind ATP. Mg(2+) contacts are provided by aspartate 72 and glutamate 140. CTP-binding positions include 147–149 (DIE), 187–192 (KTKPTQ), and lysine 223. UTP-binding positions include 187 to 192 (KTKPTQ) and lysine 223. Position 239 to 241 (239 to 241 (KDV)) interacts with ATP. Residues 291–542 (TIGMVGKYVE…VKAAGKYQKG (252 aa)) enclose the Glutamine amidotransferase type-1 domain. Glycine 352 provides a ligand contact to L-glutamine. The active-site Nucleophile; for glutamine hydrolysis is the cysteine 379. L-glutamine-binding positions include 380–383 (LGMQ), glutamate 403, and arginine 470. Residues histidine 515 and glutamate 517 contribute to the active site.

Belongs to the CTP synthase family. In terms of assembly, homotetramer.

It carries out the reaction UTP + L-glutamine + ATP + H2O = CTP + L-glutamate + ADP + phosphate + 2 H(+). The catalysed reaction is L-glutamine + H2O = L-glutamate + NH4(+). The enzyme catalyses UTP + NH4(+) + ATP = CTP + ADP + phosphate + 2 H(+). The protein operates within pyrimidine metabolism; CTP biosynthesis via de novo pathway; CTP from UDP: step 2/2. With respect to regulation, allosterically activated by GTP, when glutamine is the substrate; GTP has no effect on the reaction when ammonia is the substrate. The allosteric effector GTP functions by stabilizing the protein conformation that binds the tetrahedral intermediate(s) formed during glutamine hydrolysis. Inhibited by the product CTP, via allosteric rather than competitive inhibition. In terms of biological role, catalyzes the ATP-dependent amination of UTP to CTP with either L-glutamine or ammonia as the source of nitrogen. Regulates intracellular CTP levels through interactions with the four ribonucleotide triphosphates. The chain is CTP synthase from Photorhabdus laumondii subsp. laumondii (strain DSM 15139 / CIP 105565 / TT01) (Photorhabdus luminescens subsp. laumondii).